The following is a 432-amino-acid chain: Adenylosuccinate synthetase (432 aa).

GTP-binding positions include 12–18 and 40–42; these read GDEGKGK and GHT. Residue Asp-13 is the Proton acceptor of the active site. The Mg(2+) site is built by Asp-13 and Gly-40. IMP contacts are provided by residues 13 to 16, 38 to 41, Thr-130, Arg-144, Gln-225, Thr-240, and Arg-304; these read DEGK and NAGH. Residue His-41 is the Proton donor of the active site. 300-306 contacts substrate; it reads ATTGRPR. Residues Arg-306, 332–334, and 414–416 contribute to the GTP site; these read KLD and SVG.

The protein belongs to the adenylosuccinate synthetase family. Homodimer. It depends on Mg(2+) as a cofactor.

The protein resides in the cytoplasm. It catalyses the reaction IMP + L-aspartate + GTP = N(6)-(1,2-dicarboxyethyl)-AMP + GDP + phosphate + 2 H(+). It functions in the pathway purine metabolism; AMP biosynthesis via de novo pathway; AMP from IMP: step 1/2. Functionally, plays an important role in the de novo pathway of purine nucleotide biosynthesis. Catalyzes the first committed step in the biosynthesis of AMP from IMP. The sequence is that of Adenylosuccinate synthetase from Anaeromyxobacter sp. (strain K).